Reading from the N-terminus, the 156-residue chain is MPRRRVIGQRKILPDPKFGSELLAKFVNILMVDGKKSTAETIVYSALETLAQRSGKSELEAFEVALENVRPTVEVKSRRVGGSTYQVPVEVRPVRRNALAMRWIVEAARKRGDKSMALRLANELTDAADNKGTAVKKREDVHRMAEANKAFAHYRW.

It belongs to the universal ribosomal protein uS7 family. In terms of assembly, part of the 30S ribosomal subunit. Contacts proteins S9 and S11.

One of the primary rRNA binding proteins, it binds directly to 16S rRNA where it nucleates assembly of the head domain of the 30S subunit. Is located at the subunit interface close to the decoding center, probably blocks exit of the E-site tRNA. In Citrobacter koseri (strain ATCC BAA-895 / CDC 4225-83 / SGSC4696), this protein is Small ribosomal subunit protein uS7.